The primary structure comprises 114 residues: Large ribosomal subunit protein uL18 (114 aa).

This sequence belongs to the universal ribosomal protein uL18 family. Part of the 50S ribosomal subunit; part of the 5S rRNA/L5/L18/L25 subcomplex. Contacts the 5S and 23S rRNAs.

Its function is as follows. This is one of the proteins that bind and probably mediate the attachment of the 5S RNA into the large ribosomal subunit, where it forms part of the central protuberance. This is Large ribosomal subunit protein uL18 from Bacteroides fragilis (strain ATCC 25285 / DSM 2151 / CCUG 4856 / JCM 11019 / LMG 10263 / NCTC 9343 / Onslow / VPI 2553 / EN-2).